Reading from the N-terminus, the 382-residue chain is V-set and immunoglobulin domain-containing protein 1 (382 aa).

The first 21 residues, 1–21 (MGLTFWKVFLILNCLAGQVNG), serve as a signal peptide directing secretion. An Ig-like V-type domain is found at 22–133 (VQVTIPDSFV…FFGKNQGTIS (112 aa)). The Extracellular portion of the chain corresponds to 22 to 234 (VQVTIPDSFV…DLTTPYPGIG (213 aa)). The N-linked (GlcNAc...) asparagine glycan is linked to Asn32. Intrachain disulfides connect Cys43/Cys116 and Cys161/Cys211. The Ig-like C2-type domain occupies 140–227 (PSKPFCSIQG…GNSSCEIDLT (88 aa)). Asn200 and Asn219 each carry an N-linked (GlcNAc...) asparagine glycan. A helical transmembrane segment spans residues 235 to 255 (IIVGAFVGTLIGVIIIISVVW). Topologically, residues 256 to 382 (FVRRKVKAKG…FCDEEKVIKP (127 aa)) are cytoplasmic. The tract at residues 266-382 (KERKRNSKTT…FCDEEKVIKP (117 aa)) is disordered. Residues 273–285 (KTTTELEPMTKIN) show a composition bias toward polar residues. A compositionally biased stretch (basic and acidic residues) spans 286–298 (QRTEGETMPREDA). Over residues 327 to 341 (EPEPALQPTVEPPSG) the composition is skewed to pro residues.

It is found in the membrane. The sequence is that of V-set and immunoglobulin domain-containing protein 1 (VSIG1) from Bos taurus (Bovine).